The sequence spans 634 residues: tRNA uridine 5-carboxymethylaminomethyl modification enzyme MnmG (634 aa).

13–18 (GAGHAG) contributes to the FAD binding site. An NAD(+)-binding site is contributed by 273–287 (GPRYCPSIEDKIIKF).

It belongs to the MnmG family. As to quaternary structure, homodimer. Heterotetramer of two MnmE and two MnmG subunits. FAD serves as cofactor.

The protein resides in the cytoplasm. Its function is as follows. NAD-binding protein involved in the addition of a carboxymethylaminomethyl (cmnm) group at the wobble position (U34) of certain tRNAs, forming tRNA-cmnm(5)s(2)U34. In Buchnera aphidicola subsp. Cinara cedri (strain Cc), this protein is tRNA uridine 5-carboxymethylaminomethyl modification enzyme MnmG.